The following is a 430-amino-acid chain: Enolase (430 aa).

Residue Q163 coordinates (2R)-2-phosphoglycerate. E205 (proton donor) is an active-site residue. Mg(2+) is bound by residues D242, E288, and D315. Residues K340, R369, S370, and K391 each contribute to the (2R)-2-phosphoglycerate site. The active-site Proton acceptor is K340.

This sequence belongs to the enolase family. Mg(2+) is required as a cofactor.

It is found in the cytoplasm. The protein resides in the secreted. The protein localises to the cell surface. It catalyses the reaction (2R)-2-phosphoglycerate = phosphoenolpyruvate + H2O. It participates in carbohydrate degradation; glycolysis; pyruvate from D-glyceraldehyde 3-phosphate: step 4/5. Its function is as follows. Catalyzes the reversible conversion of 2-phosphoglycerate (2-PG) into phosphoenolpyruvate (PEP). It is essential for the degradation of carbohydrates via glycolysis. The sequence is that of Enolase from Acidobacterium capsulatum (strain ATCC 51196 / DSM 11244 / BCRC 80197 / JCM 7670 / NBRC 15755 / NCIMB 13165 / 161).